The primary structure comprises 920 residues: Isoleucine--tRNA ligase (920 aa).

Positions 58–68 match the 'HIGH' region motif; that stretch reads PYANGHLHLGH. L-isoleucyl-5'-AMP is bound at residue Glu-569. Residues 610 to 614 carry the 'KMSKS' region motif; that stretch reads KMSKS. Lys-613 provides a ligand contact to ATP. Zn(2+) is bound by residues Cys-895, Cys-898, Cys-910, and Cys-913.

The protein belongs to the class-I aminoacyl-tRNA synthetase family. IleS type 1 subfamily. As to quaternary structure, monomer. Requires Zn(2+) as cofactor.

It is found in the cytoplasm. It carries out the reaction tRNA(Ile) + L-isoleucine + ATP = L-isoleucyl-tRNA(Ile) + AMP + diphosphate. Functionally, catalyzes the attachment of isoleucine to tRNA(Ile). As IleRS can inadvertently accommodate and process structurally similar amino acids such as valine, to avoid such errors it has two additional distinct tRNA(Ile)-dependent editing activities. One activity is designated as 'pretransfer' editing and involves the hydrolysis of activated Val-AMP. The other activity is designated 'posttransfer' editing and involves deacylation of mischarged Val-tRNA(Ile). This Helicobacter pylori (strain G27) protein is Isoleucine--tRNA ligase.